A 152-amino-acid chain; its full sequence is Isoquinoline 1-oxidoreductase subunit alpha (152 aa).

In terms of domain architecture, 2Fe-2S ferredoxin-type spans 1-77; it reads MIEFILNGQP…RQSVTTIEGL (77 aa). 3 residues coordinate [2Fe-2S] cluster: C39, C44, and C47.

As to quaternary structure, heterodimer of an alpha chain and a beta chain.

The catalysed reaction is isoquinoline + A + H2O = isoquinolin-1(2H)-one + AH2. Its function is as follows. Specific towards N-containing N-heterocyclic substrates, including isoquinoline, isoquinolin-5-ol, phthalazine and quinazoline. The protein is Isoquinoline 1-oxidoreductase subunit alpha (iorA) of Brevundimonas diminuta (Pseudomonas diminuta).